A 453-amino-acid chain; its full sequence is Validoxylamine A glucosyltransferase (453 aa).

The protein belongs to the glycosyltransferase 2 family. Mn(2+) is required as a cofactor.

The enzyme catalyses validoxylamine A + UDP-alpha-D-glucose = validamycin A + UDP + H(+). Its function is as follows. Involved in the biosynthesis of the antifungal agent validamycin A. Catalyzes the final attachment of glucose from UDP-alpha-D-glucose to validoxylamine A to yield validamycin A. This chain is Validoxylamine A glucosyltransferase, found in Streptomyces hygroscopicus subsp. limoneus.